Reading from the N-terminus, the 1214-residue chain is [F-actin]-monooxygenase mical1 (1214 aa).

Residues 1 to 488 form a monooxygenase domain region; the sequence is MVNPLDSVNP…KRLYEAEEQE (488 aa). FAD contacts are provided by residues Cys-96, 115–117, 122–124, Phe-182, Tyr-292, and Asp-392; these read EKR and RNN. A disordered region spans residues 484–505; that stretch reads AEEQESKPNKLKKPDIKAKPRK. The region spanning 508–614 is the Calponin-homology (CH) domain; it reads MKRLEELLSW…YLTQIRNALT (107 aa). Residues 649–676 are disordered; sequence HKDRLASVKGPRQQNMKEKEEKKDVKEE. A compositionally biased stretch (basic and acidic residues) spans 663 to 676; sequence NMKEKEEKKDVKEE. Residues 686–748 form the LIM zinc-binding domain; that stretch reads EPCYFCKKHL…ELHSLAEEEE (63 aa). Positions 688, 691, 709, 712, 715, 718, 738, and 741 each coordinate Zn(2+). The disordered stretch occupies residues 747 to 1019; that stretch reads EEGDEGHGGA…DDEDEDEEDL (273 aa). Over residues 796-815 the composition is skewed to acidic residues; it reads PDFDESTEFPAPDQDEPPDL. Over residues 828 to 841 the composition is skewed to polar residues; sequence SAENTNMENQQHNI. The span at 910 to 922 shows a compositional bias: low complexity; it reads RGSSSAASTSSSS. The segment covering 974–987 has biased composition (polar residues); it reads SPWNLSSPRLQQRF. Positions 1003-1019 are enriched in acidic residues; that stretch reads VSEDDNEDDEDEDEEDL. The bMERB domain occupies 1053–1199; that stretch reads KMTEIQRFHK…EVNDQFNSSL (147 aa). A coiled-coil region spans residues 1061–1131; the sequence is HKAQSIQRRL…DLMVASRQLE (71 aa). Positions 1194 to 1214 are disordered; sequence QFNSSLDAKRRSTTASQVHWE.

The protein belongs to the Mical family. FAD serves as cofactor.

Its subcellular location is the cytoplasm. The protein localises to the cytoskeleton. The protein resides in the midbody. It localises to the endosome membrane. The catalysed reaction is L-methionyl-[F-actin] + NADPH + O2 + H(+) = L-methionyl-(R)-S-oxide-[F-actin] + NADP(+) + H2O. It carries out the reaction NADPH + O2 + H(+) = H2O2 + NADP(+). In terms of biological role, monooxygenase that promotes depolymerization of F-actin by mediating oxidation of specific methionine residues on actin to form methionine-sulfoxide, resulting in actin filament disassembly and prevent repolymerization. May be involved in endosomal tubule extension and neosynthesized protein export. This is [F-actin]-monooxygenase mical1 (mical1) from Danio rerio (Zebrafish).